A 350-amino-acid chain; its full sequence is Biotin synthase (350 aa).

A Radical SAM core domain is found at 54 to 278 (REIQLSTLLS…TMPQSYVRLS (225 aa)). 3 residues coordinate [4Fe-4S] cluster: C69, C73, and C76. [2Fe-2S] cluster contacts are provided by C113, C144, C204, and R276.

The protein belongs to the radical SAM superfamily. Biotin synthase family. As to quaternary structure, homodimer. [4Fe-4S] cluster is required as a cofactor. [2Fe-2S] cluster serves as cofactor.

It catalyses the reaction (4R,5S)-dethiobiotin + (sulfur carrier)-SH + 2 reduced [2Fe-2S]-[ferredoxin] + 2 S-adenosyl-L-methionine = (sulfur carrier)-H + biotin + 2 5'-deoxyadenosine + 2 L-methionine + 2 oxidized [2Fe-2S]-[ferredoxin]. It participates in cofactor biosynthesis; biotin biosynthesis; biotin from 7,8-diaminononanoate: step 2/2. Catalyzes the conversion of dethiobiotin (DTB) to biotin by the insertion of a sulfur atom into dethiobiotin via a radical-based mechanism. The protein is Biotin synthase of Neisseria meningitidis serogroup B (strain ATCC BAA-335 / MC58).